Here is a 287-residue protein sequence, read N- to C-terminus: Immunoglobulin alpha Fc receptor (287 aa).

The first 21 residues, 1–21 (MDPKQTTLLCLVLCLGQRIQA), serve as a signal peptide directing secretion. The Extracellular segment spans residues 22–227 (QEGDFPMPFI…SIHQDYTTQN (206 aa)). Ig-like C2-type domains follow at residues 42–107 (DGSV…IGHY) and 139–200 (GENI…YNRS). A disulfide bond links Cys-49 and Cys-100. Asn-65, Asn-79, Asn-141, Asn-177, and Asn-186 each carry an N-linked (GlcNAc...) asparagine glycan. A disulfide bridge links Cys-146 with Cys-193. A helical membrane pass occupies residues 228–246 (LIRMAVAGLVLVALLAILV). At 247–287 (ENWHSHTALNKEASADVAEPSWSQQMCQPGLTFARTPSVCK) the chain is on the cytoplasmic side.

As to quaternary structure, associates with the Fc epsilon RI gamma 2 receptor inducing tyrosine phosphorylation of gamma 2. (Microbial infection) Interacts with Staphylococcus aureus protein SSL11. In terms of tissue distribution, isoform A.1, isoform A.2 and isoform A.3 are differentially expressed between blood and mucosal myeloid cells. Isoform A.1, isoform A.2 and isoform A.3 are expressed in monocytes. Isoform A.1 and isoform A.2 are expressed in alveolar macrophages; however only one isoform is expressed at alveolar macrophages surfaces.

It localises to the cell membrane. It is found in the secreted. Its function is as follows. Binds to the Fc region of immunoglobulins alpha. Mediates several functions including cytokine production. The polypeptide is Immunoglobulin alpha Fc receptor (FCAR) (Homo sapiens (Human)).